We begin with the raw amino-acid sequence, 306 residues long: Ribosomal RNA small subunit methyltransferase H (306 aa).

S-adenosyl-L-methionine is bound by residues 33–35 (GGY), Asp-51, Phe-78, Asp-96, and Gln-103.

Belongs to the methyltransferase superfamily. RsmH family.

The protein localises to the cytoplasm. It carries out the reaction cytidine(1402) in 16S rRNA + S-adenosyl-L-methionine = N(4)-methylcytidine(1402) in 16S rRNA + S-adenosyl-L-homocysteine + H(+). In terms of biological role, specifically methylates the N4 position of cytidine in position 1402 (C1402) of 16S rRNA. The sequence is that of Ribosomal RNA small subunit methyltransferase H from Rickettsia typhi (strain ATCC VR-144 / Wilmington).